The sequence spans 277 residues: 3-methyl-2-oxobutanoate hydroxymethyltransferase (277 aa).

Positions 53 and 96 each coordinate Mg(2+). 3-methyl-2-oxobutanoate is bound by residues 53-54 (DS), Asp96, and Lys126. A Mg(2+)-binding site is contributed by Glu128. The active-site Proton acceptor is the Glu195.

It belongs to the PanB family. In terms of assembly, homodecamer; pentamer of dimers. It depends on Mg(2+) as a cofactor.

The protein localises to the cytoplasm. It carries out the reaction 3-methyl-2-oxobutanoate + (6R)-5,10-methylene-5,6,7,8-tetrahydrofolate + H2O = 2-dehydropantoate + (6S)-5,6,7,8-tetrahydrofolate. The protein operates within cofactor biosynthesis; (R)-pantothenate biosynthesis; (R)-pantoate from 3-methyl-2-oxobutanoate: step 1/2. Catalyzes the reversible reaction in which hydroxymethyl group from 5,10-methylenetetrahydrofolate is transferred onto alpha-ketoisovalerate to form ketopantoate. In Chlorobaculum parvum (strain DSM 263 / NCIMB 8327) (Chlorobium vibrioforme subsp. thiosulfatophilum), this protein is 3-methyl-2-oxobutanoate hydroxymethyltransferase.